The chain runs to 25 residues: Kappa-conotoxin RIIIJ (25 aa).

7 positions are modified to 4-hydroxyproline: P2, P3, P7, P8, P13, P15, and P21. 3 cysteine pairs are disulfide-bonded: C4/C17, C5/C22, and C12/C23.

Belongs to the conotoxin M superfamily. In terms of tissue distribution, expressed by the venom duct.

It localises to the secreted. Its function is as follows. Kappa-conotoxins inhibits voltage-gated potassium channels. This toxin dose-dependently and reversibly inhibits the Kv1.2/KCNA2 channel in mammalia. Does not exert protective effect on cardiac tissue when administered after an ischemic event. This Conus radiatus (Rayed cone) protein is Kappa-conotoxin RIIIJ.